Reading from the N-terminus, the 1000-residue chain is MTAPGRRSSTFSRLLRHGFTDPSAAERLLESAELEPVKADPVLLEALGATADPDLALLGLVRLVEAQDDHTARRELLDTLIAAKPLRDRLLGVLGASAALADHLARHPRDWQALVTYEPRDLHPGVEEFERGLAEAADPVSLRVAYRRCLLSIAARDVCGTTDLAQTAAELADLATATLRAALLIARTAAPDDAAICRLAVIAMGKCGGHELNYVSDVDVIFVGEPANGADEGKAVQAATRLASHMMRICSETTVEGTIWPVDANLRPEGRNGPLVRTLSSHLAYYQRWAKTWEFQALLKARPVAGDIGLGEEYVATLAPLVWQAAERDNFVADVQKMRRRVVANIPAAEIERELKLGPGGLRDVEFAVQLLQLVHGRADASLRSGTTLDALKALAAGGYVGRADAVQLDEAYRFLRTMEHRIQLFRLRRTHLVPEDDADLRRIGRSLGLRADPITDLNREWKRHATVVRRLHEKLFYRPLLDAVAQLAPGEARLSPNAARERLVALGYADPAAALRHLEALASGVTRKAAIQRTLLPVLLGWFADSADPDAGLLNFRKVSDALGKTPWYLRLLRDEGAAAENLARVLSAGRLAPDLLMRAPEAVALLGDGDGGRGGLEPRGRAQLEQEVLAAVGRAGGSEQAVTTVRGVRRRELFRTAARDIVSSYGTEETPAEADQGALVDLVGGAVSDLTAATLAGTLRAVVREGWGDTLPTRFAVVGMGRFGGYELGYGSDADVLFVHEPREGVDEQEAARAANAVVSEMRRLLQIPSADPPLLIDADLRPEGKSGPTVRTLTSYEAYYRRWSLVWESQALLRAEFVAGDEELGQRFIELIDPFRYPAEGLGDDAVREIRRLKARMEAERLPRGADPTLHTKLGRGGLSDVEWTVQLLQLQHGWVEPGLRTTRTRPALAAACAAGLLTGEDAAILDEAWVLATRVRNAVMLVRGRAGDTFPSDGRELAAVGRYLGYGPGHVGDMLDDYRRITRRARAVVDEQFYGA.

Residues 1–481 form an adenylyl removase region; it reads MTAPGRRSST…LHEKLFYRPL (481 aa). Residues 487 to 1000 are adenylyl transferase; sequence QLAPGEARLS…AVVDEQFYGA (514 aa).

This sequence belongs to the GlnE family. It depends on Mg(2+) as a cofactor.

The enzyme catalyses [glutamine synthetase]-O(4)-(5'-adenylyl)-L-tyrosine + phosphate = [glutamine synthetase]-L-tyrosine + ADP. It carries out the reaction [glutamine synthetase]-L-tyrosine + ATP = [glutamine synthetase]-O(4)-(5'-adenylyl)-L-tyrosine + diphosphate. Involved in the regulation of glutamine synthetase GlnA, a key enzyme in the process to assimilate ammonia. When cellular nitrogen levels are high, the C-terminal adenylyl transferase (AT) inactivates GlnA by covalent transfer of an adenylyl group from ATP to specific tyrosine residue of GlnA, thus reducing its activity. Conversely, when nitrogen levels are low, the N-terminal adenylyl removase (AR) activates GlnA by removing the adenylyl group by phosphorolysis, increasing its activity. The regulatory region of GlnE binds the signal transduction protein PII (GlnB) which indicates the nitrogen status of the cell. The sequence is that of Bifunctional glutamine synthetase adenylyltransferase/adenylyl-removing enzyme from Streptomyces avermitilis (strain ATCC 31267 / DSM 46492 / JCM 5070 / NBRC 14893 / NCIMB 12804 / NRRL 8165 / MA-4680).